A 120-amino-acid polypeptide reads, in one-letter code: uncharacterized protein (120 aa).

The N-terminal stretch at M1–S16 is a signal peptide.

This is an uncharacterized protein from Acheta domesticus (House cricket).